The sequence spans 755 residues: Protein phosphatase 1E (755 aa).

The segment at 21–131 (EFRGPCGGGE…PPLPPLPRPL (111 aa)) is disordered. A run of 7 repeats spans residues 31–32 (PE), 33–34 (PE), 35–36 (PE), 37–38 (PE), 39–40 (PE), 41–42 (PE), and 43–44 (PE). Residues 31 to 52 (PEPEPEPEPEPEPESEPEPEPE) are 11 X 2 AA tandem repeats of P-E. Acidic residues-rich tracts occupy residues 31 to 68 (PEPEPEPEPEPEPESEPEPEPELVEAEAAEASVEEPGE) and 77 to 101 (EEGDQEQDPEPEEEAAVEGEEEEEG). An 8; approximate repeat occupies 45-46 (SE). 3 repeat units span residues 47–48 (PE), 49–50 (PE), and 51–52 (PE). The span at 102–113 (AATAAAAPGHSA) shows a compositional bias: low complexity. Positions 114–129 (VPPPPPQLPPLPPLPR) are enriched in pro residues. The PPM-type phosphatase domain maps to 231-488 (ETSIHAIKNM…DNITVIVVFL (258 aa)). Positions 273, 274, 435, and 479 each coordinate Mn(2+). Positions 498–537 (SEESDWTENSFQGGQEDGGDDKENHGECKRPWPQHQCSAP) are disordered. Residues 518–527 (DKENHGECKR) show a composition bias toward basic and acidic residues. Phosphoserine is present on residues serine 535 and serine 548.

The protein belongs to the PP2C family. In terms of assembly, heterotrimer. Interacts with PAX1 and ARHGEF6 (or ARHGEF7). Mg(2+) serves as cofactor. Requires Mn(2+) as cofactor.

It localises to the nucleus. It is found in the cytoplasm. The catalysed reaction is O-phospho-L-seryl-[protein] + H2O = L-seryl-[protein] + phosphate. It catalyses the reaction O-phospho-L-threonyl-[protein] + H2O = L-threonyl-[protein] + phosphate. In terms of biological role, protein phosphatase that inactivates multifunctional CaM kinases such as CAMK4 and CAMK2. Dephosphorylates and inactivates PAK. May play a role in the inhibition of actin fiber stress breakdown and in morphological changes driven by TNK2/CDC42. Dephosphorylates PRKAA2. This chain is Protein phosphatase 1E (PPM1E), found in Homo sapiens (Human).